Consider the following 348-residue polypeptide: Fructose-1,6-bisphosphatase class 1 (348 aa).

Residues Glu92, Asp111, Leu113, and Asp114 each coordinate Mg(2+). Residues 114–117 (DGSS) and Asn204 contribute to the substrate site. A Mg(2+)-binding site is contributed by Glu276.

Belongs to the FBPase class 1 family. In terms of assembly, homotetramer. Mg(2+) is required as a cofactor.

It localises to the cytoplasm. It carries out the reaction beta-D-fructose 1,6-bisphosphate + H2O = beta-D-fructose 6-phosphate + phosphate. Its pathway is carbohydrate biosynthesis; gluconeogenesis. This is Fructose-1,6-bisphosphatase class 1 from Methylorubrum populi (strain ATCC BAA-705 / NCIMB 13946 / BJ001) (Methylobacterium populi).